A 412-amino-acid chain; its full sequence is Putative competence-damage inducible protein (412 aa).

It belongs to the CinA family.

The sequence is that of Putative competence-damage inducible protein from Bacillus cereus (strain ATCC 14579 / DSM 31 / CCUG 7414 / JCM 2152 / NBRC 15305 / NCIMB 9373 / NCTC 2599 / NRRL B-3711).